We begin with the raw amino-acid sequence, 175 residues long: Albumin-1 (175 aa).

A disulfide bridge links C135 with C141.

The protein belongs to the protease inhibitor I3 (leguminous Kunitz-type inhibitor) family.

In terms of biological role, 2S seed storage protein. This chain is Albumin-1, found in Psophocarpus tetragonolobus (Winged bean).